Reading from the N-terminus, the 252-residue chain is 2-succinyl-6-hydroxy-2,4-cyclohexadiene-1-carboxylate synthase (252 aa).

It belongs to the AB hydrolase superfamily. MenH family. As to quaternary structure, monomer.

It catalyses the reaction 5-enolpyruvoyl-6-hydroxy-2-succinyl-cyclohex-3-ene-1-carboxylate = (1R,6R)-6-hydroxy-2-succinyl-cyclohexa-2,4-diene-1-carboxylate + pyruvate. It functions in the pathway quinol/quinone metabolism; 1,4-dihydroxy-2-naphthoate biosynthesis; 1,4-dihydroxy-2-naphthoate from chorismate: step 3/7. The protein operates within quinol/quinone metabolism; menaquinone biosynthesis. Catalyzes a proton abstraction reaction that results in 2,5-elimination of pyruvate from 2-succinyl-5-enolpyruvyl-6-hydroxy-3-cyclohexene-1-carboxylate (SEPHCHC) and the formation of 2-succinyl-6-hydroxy-2,4-cyclohexadiene-1-carboxylate (SHCHC). This is 2-succinyl-6-hydroxy-2,4-cyclohexadiene-1-carboxylate synthase from Salmonella enteritidis PT4 (strain P125109).